The following is a 358-amino-acid chain: UDP-N-acetylglucosamine--N-acetylmuramyl-(pentapeptide) pyrophosphoryl-undecaprenol N-acetylglucosamine transferase (358 aa).

UDP-N-acetyl-alpha-D-glucosamine is bound by residues 11-13, asparagine 124, arginine 164, serine 195, and glutamine 291; that span reads TGG.

Belongs to the glycosyltransferase 28 family. MurG subfamily.

It is found in the cell inner membrane. The catalysed reaction is di-trans,octa-cis-undecaprenyl diphospho-N-acetyl-alpha-D-muramoyl-L-alanyl-D-glutamyl-meso-2,6-diaminopimeloyl-D-alanyl-D-alanine + UDP-N-acetyl-alpha-D-glucosamine = di-trans,octa-cis-undecaprenyl diphospho-[N-acetyl-alpha-D-glucosaminyl-(1-&gt;4)]-N-acetyl-alpha-D-muramoyl-L-alanyl-D-glutamyl-meso-2,6-diaminopimeloyl-D-alanyl-D-alanine + UDP + H(+). Its pathway is cell wall biogenesis; peptidoglycan biosynthesis. Its function is as follows. Cell wall formation. Catalyzes the transfer of a GlcNAc subunit on undecaprenyl-pyrophosphoryl-MurNAc-pentapeptide (lipid intermediate I) to form undecaprenyl-pyrophosphoryl-MurNAc-(pentapeptide)GlcNAc (lipid intermediate II). The polypeptide is UDP-N-acetylglucosamine--N-acetylmuramyl-(pentapeptide) pyrophosphoryl-undecaprenol N-acetylglucosamine transferase (Leptospira borgpetersenii serovar Hardjo-bovis (strain JB197)).